Consider the following 163-residue polypeptide: NADH-quinone oxidoreductase subunit I (163 aa).

2 consecutive 4Fe-4S ferredoxin-type domains span residues 55–84 (RRYENGEERCIACKLCEAVCPANAITIESE) and 94–123 (TQYDIDMFKCIYCGFCEEACPVDAVVETRV). 8 residues coordinate [4Fe-4S] cluster: Cys-64, Cys-67, Cys-70, Cys-74, Cys-103, Cys-106, Cys-109, and Cys-113.

This sequence belongs to the complex I 23 kDa subunit family. As to quaternary structure, NDH-1 is composed of 14 different subunits. Subunits NuoA, H, J, K, L, M, N constitute the membrane sector of the complex. [4Fe-4S] cluster is required as a cofactor.

It is found in the cell inner membrane. It carries out the reaction a quinone + NADH + 5 H(+)(in) = a quinol + NAD(+) + 4 H(+)(out). NDH-1 shuttles electrons from NADH, via FMN and iron-sulfur (Fe-S) centers, to quinones in the respiratory chain. The immediate electron acceptor for the enzyme in this species is believed to be ubiquinone. Couples the redox reaction to proton translocation (for every two electrons transferred, four hydrogen ions are translocated across the cytoplasmic membrane), and thus conserves the redox energy in a proton gradient. The protein is NADH-quinone oxidoreductase subunit I of Hydrogenovibrio crunogenus (strain DSM 25203 / XCL-2) (Thiomicrospira crunogena).